The sequence spans 182 residues: Fimbrial subunit type 1 (182 aa).

Residues methionine 1–alanine 23 form the signal peptide. A disulfide bond links cysteine 44 and cysteine 84.

Belongs to the fimbrial protein family.

The protein localises to the fimbrium. This is Fimbrial subunit type 1 from Klebsiella pneumoniae.